The following is a 474-amino-acid chain: Aromatic amino acid aminotransferase C56E4.03 (474 aa).

The protein belongs to the class-I pyridoxal-phosphate-dependent aminotransferase family. The cofactor is pyridoxal 5'-phosphate.

It localises to the cytoplasm. The enzyme catalyses an aromatic L-alpha-amino acid + 2-oxoglutarate = an aromatic oxo-acid + L-glutamate. Has aromatic amino acid transaminase activity. This is Aromatic amino acid aminotransferase C56E4.03 from Schizosaccharomyces pombe (strain 972 / ATCC 24843) (Fission yeast).